We begin with the raw amino-acid sequence, 51 residues long: Large ribosomal subunit protein eL39 (51 aa).

Positions Met1–Asn19 are enriched in basic residues. Residues Met1 to Pro23 are disordered.

It belongs to the eukaryotic ribosomal protein eL39 family.

In Methanosarcina mazei (strain ATCC BAA-159 / DSM 3647 / Goe1 / Go1 / JCM 11833 / OCM 88) (Methanosarcina frisia), this protein is Large ribosomal subunit protein eL39.